Consider the following 233-residue polypeptide: H-2 class II histocompatibility antigen, A-S alpha chain (233 aa).

An alpha-1 region spans residues 1-88 (EDDIEADHVG…KRSNSTPATN (88 aa)). Residues 1–195 (EDDIEADHVG…IPAPMSELTE (195 aa)) are Extracellular-facing. The interval 89–182 (EAPQATVFPK…GLEEPVLKHW (94 aa)) is alpha-2. Residues 91-183 (PQATVFPKSP…LEEPVLKHWE (93 aa)) enclose the Ig-like C1-type domain. An intrachain disulfide couples cysteine 111 to cysteine 167. Residue asparagine 122 is glycosylated (N-linked (GlcNAc...) asparagine). A connecting peptide region spans residues 183–195 (EPEIPAPMSELTE). A helical membrane pass occupies residues 196 to 221 (TVVCALGLSVGLVGIVVGTIFIIQGL). Residues 222–233 (RSGGTSRHPGPL) are Cytoplasmic-facing.

Belongs to the MHC class II family.

Its subcellular location is the membrane. This is H-2 class II histocompatibility antigen, A-S alpha chain (H2-Aa) from Mus musculus (Mouse).